Here is a 261-residue protein sequence, read N- to C-terminus: 3'-5' ssDNA/RNA exonuclease TatD (261 aa).

A divalent metal cation is bound by residues Glu92, His128, and His153.

This sequence belongs to the metallo-dependent hydrolases superfamily. TatD-type hydrolase family. TatD subfamily. In terms of assembly, monomer. Requires Mg(2+) as cofactor.

The protein localises to the cytoplasm. Its function is as follows. 3'-5' exonuclease that prefers single-stranded DNA and RNA. May play a role in the H(2)O(2)-induced DNA damage repair. The chain is 3'-5' ssDNA/RNA exonuclease TatD from Erwinia billingiae (strain Eb661).